The chain runs to 208 residues: OVARIAN TUMOR DOMAIN-containing deubiquitinating enzyme 2 (208 aa).

In terms of domain architecture, OTU spans 5–127 (IVRRVIPSDN…GLHYDALALS (123 aa)). The active site involves Asp-13. Cys-16 (nucleophile) is an active-site residue. Catalysis depends on residues His-120 and His-201.

This sequence belongs to the peptidase C85 family.

It carries out the reaction Thiol-dependent hydrolysis of ester, thioester, amide, peptide and isopeptide bonds formed by the C-terminal Gly of ubiquitin (a 76-residue protein attached to proteins as an intracellular targeting signal).. Hydrolase that can remove conjugated ubiquitin from proteins in vitro and may therefore play an important regulatory role at the level of protein turnover by preventing degradation. Cysteine protease with a preference for 'Lys-63' and 'Lys-48' -linked ubiquitin (UB) tetramers as substrates. The chain is OVARIAN TUMOR DOMAIN-containing deubiquitinating enzyme 2 from Arabidopsis thaliana (Mouse-ear cress).